Consider the following 65-residue polypeptide: MGAALKMTIFLLIVACAMIATTEAAVRIGPCDQVCPRIVPERHECCRAHGRSGYAYCSGGGMYCN.

Residues 1–24 (MGAALKMTIFLLIVACAMIATTEA) form the signal peptide. Cystine bridges form between C31–C45, C35–C57, and C46–C64.

Highly expressed in the fat body.

Its subcellular location is the secreted. Functionally, has antifungal activity against T.rubrum. Blocks voltage-dependent N-type calcium channels (Cav2.2 / CACNA1B). This chain is Diapause-specific peptide, found in Gastrophysa atrocyanea (Leaf beetle).